A 232-amino-acid polypeptide reads, in one-letter code: 2-C-methyl-D-erythritol 4-phosphate cytidylyltransferase (232 aa).

This sequence belongs to the IspD/TarI cytidylyltransferase family. IspD subfamily.

The enzyme catalyses 2-C-methyl-D-erythritol 4-phosphate + CTP + H(+) = 4-CDP-2-C-methyl-D-erythritol + diphosphate. It functions in the pathway isoprenoid biosynthesis; isopentenyl diphosphate biosynthesis via DXP pathway; isopentenyl diphosphate from 1-deoxy-D-xylulose 5-phosphate: step 2/6. Catalyzes the formation of 4-diphosphocytidyl-2-C-methyl-D-erythritol from CTP and 2-C-methyl-D-erythritol 4-phosphate (MEP). This Synechococcus sp. (strain ATCC 27144 / PCC 6301 / SAUG 1402/1) (Anacystis nidulans) protein is 2-C-methyl-D-erythritol 4-phosphate cytidylyltransferase.